The primary structure comprises 101 residues: Small ribosomal subunit protein uS14 (101 aa).

It belongs to the universal ribosomal protein uS14 family. Part of the 30S ribosomal subunit. Contacts proteins S3 and S10.

Binds 16S rRNA, required for the assembly of 30S particles and may also be responsible for determining the conformation of the 16S rRNA at the A site. This Shewanella oneidensis (strain ATCC 700550 / JCM 31522 / CIP 106686 / LMG 19005 / NCIMB 14063 / MR-1) protein is Small ribosomal subunit protein uS14.